Consider the following 409-residue polypeptide: Dual-specificity RNA methyltransferase RlmN (409 aa).

Glu117 (proton acceptor) is an active-site residue. A Radical SAM core domain is found at 128–377 (LNGRKTLCIS…CTIRQTRGDD (250 aa)). Cys135 and Cys382 are oxidised to a cystine. 3 residues coordinate [4Fe-4S] cluster: Cys142, Cys146, and Cys149. S-adenosyl-L-methionine-binding positions include 205–206 (GE), Ser237, 259–261 (SLH), and Asn339. Cys382 (S-methylcysteine intermediate) is an active-site residue.

The protein belongs to the radical SAM superfamily. RlmN family. [4Fe-4S] cluster serves as cofactor.

The protein localises to the cytoplasm. It catalyses the reaction adenosine(2503) in 23S rRNA + 2 reduced [2Fe-2S]-[ferredoxin] + 2 S-adenosyl-L-methionine = 2-methyladenosine(2503) in 23S rRNA + 5'-deoxyadenosine + L-methionine + 2 oxidized [2Fe-2S]-[ferredoxin] + S-adenosyl-L-homocysteine. The enzyme catalyses adenosine(37) in tRNA + 2 reduced [2Fe-2S]-[ferredoxin] + 2 S-adenosyl-L-methionine = 2-methyladenosine(37) in tRNA + 5'-deoxyadenosine + L-methionine + 2 oxidized [2Fe-2S]-[ferredoxin] + S-adenosyl-L-homocysteine. Specifically methylates position 2 of adenine 2503 in 23S rRNA and position 2 of adenine 37 in tRNAs. m2A2503 modification seems to play a crucial role in the proofreading step occurring at the peptidyl transferase center and thus would serve to optimize ribosomal fidelity. The protein is Dual-specificity RNA methyltransferase RlmN of Psychrobacter arcticus (strain DSM 17307 / VKM B-2377 / 273-4).